The sequence spans 80 residues: DinI-like protein Z2083/ECs2153 (80 aa).

This Escherichia coli O157:H7 protein is DinI-like protein Z2083/ECs2153.